A 129-amino-acid chain; its full sequence is Small ribosomal subunit protein uS11 (129 aa).

Belongs to the universal ribosomal protein uS11 family. Part of the 30S ribosomal subunit. Interacts with proteins S7 and S18. Binds to IF-3.

Located on the platform of the 30S subunit, it bridges several disparate RNA helices of the 16S rRNA. Forms part of the Shine-Dalgarno cleft in the 70S ribosome. The protein is Small ribosomal subunit protein uS11 of Sodalis glossinidius (strain morsitans).